A 96-amino-acid polypeptide reads, in one-letter code: Nucleoid-associated protein CT_335 (96 aa).

Belongs to the YbaB/EbfC family. In terms of assembly, homodimer.

The protein resides in the cytoplasm. The protein localises to the nucleoid. In terms of biological role, binds to DNA and alters its conformation. May be involved in regulation of gene expression, nucleoid organization and DNA protection. The polypeptide is Nucleoid-associated protein CT_335 (Chlamydia trachomatis serovar D (strain ATCC VR-885 / DSM 19411 / UW-3/Cx)).